The primary structure comprises 183 residues: Large ribosomal subunit protein eL18 (183 aa).

Residues His-151–Val-183 form a disordered region.

Belongs to the eukaryotic ribosomal protein eL18 family.

Its subcellular location is the cytoplasm. This is Large ribosomal subunit protein eL18 (RpL18) from Plutella xylostella (Diamondback moth).